A 178-amino-acid chain; its full sequence is Inorganic pyrophosphatase (178 aa).

Substrate-binding residues include K30, R44, and Y56. Residues D66, D71, and D103 each contribute to the Mg(2+) site. Y142 lines the substrate pocket.

This sequence belongs to the PPase family. As to quaternary structure, homohexamer. Requires Mg(2+) as cofactor.

The protein resides in the cytoplasm. It carries out the reaction diphosphate + H2O = 2 phosphate + H(+). Functionally, catalyzes the hydrolysis of inorganic pyrophosphate (PPi) forming two phosphate ions. This chain is Inorganic pyrophosphatase, found in Xanthomonas axonopodis pv. citri (strain 306).